We begin with the raw amino-acid sequence, 44 residues long: Photosystem I reaction center subunit IX (44 aa).

The chain crosses the membrane as a helical span at residues Tyr7–Ile27.

The protein belongs to the PsaJ family.

It is found in the plastid. It localises to the chloroplast thylakoid membrane. In terms of biological role, may help in the organization of the PsaE and PsaF subunits. The chain is Photosystem I reaction center subunit IX from Oryza nivara (Indian wild rice).